The chain runs to 324 residues: Zinc finger C2HC domain-containing protein 1A (324 aa).

The segment at 15-44 (DLLPCKICGRTFFPLALKKHGPICQKTATK) adopts a C2HC/C3H-type 1 zinc-finger fold. Zn(2+) contacts are provided by Cys19, Cys22, His34, and Cys38. The segment at 43–83 (TKKRKTFDSSRQRAEGTDIPTVKPLKPRPEPPKKPSNWRRK) is disordered. A compositionally biased stretch (basic and acidic residues) spans 48 to 58 (TFDSSRQRAEG). A C2HC/C3H-type 2 zinc finger spans residues 118–147 (DYIQCPYCQRRFNENAADRHINFCKEQAAR). Residues Cys122, Cys125, His137, and Cys141 each coordinate Zn(2+). A disordered region spans residues 149-225 (SNKGKFSTDS…NKPQTLSPSH (77 aa)). The segment covering 176 to 187 (SNPPGIPSSGSS) has biased composition (low complexity). Composition is skewed to polar residues over residues 188–198 (RLPQPSTTSKT) and 206–223 (KASSVNSPLGNKPQTLSP). Residue Ser222 is modified to Phosphoserine. Thr243 is modified (phosphothreonine). Position 291 is a phosphoserine (Ser291).

The protein belongs to the ZC2HC1 family. It depends on Zn(2+) as a cofactor.

This is Zinc finger C2HC domain-containing protein 1A (Zc2hc1a) from Mus musculus (Mouse).